Here is a 426-residue protein sequence, read N- to C-terminus: Phosphomethylpyrimidine synthase (426 aa).

Residues Asn66, Met95, Tyr124, His163, 185-187 (SRG), 226-229 (DGLR), and Glu265 each bind substrate. A Zn(2+)-binding site is contributed by His269. Tyr292 lines the substrate pocket. A Zn(2+)-binding site is contributed by His333. Residues Cys407, Cys410, and Cys414 each coordinate [4Fe-4S] cluster.

Belongs to the ThiC family. [4Fe-4S] cluster serves as cofactor.

It carries out the reaction 5-amino-1-(5-phospho-beta-D-ribosyl)imidazole + S-adenosyl-L-methionine = 4-amino-2-methyl-5-(phosphooxymethyl)pyrimidine + CO + 5'-deoxyadenosine + formate + L-methionine + 3 H(+). It participates in cofactor biosynthesis; thiamine diphosphate biosynthesis. Its function is as follows. Catalyzes the synthesis of the hydroxymethylpyrimidine phosphate (HMP-P) moiety of thiamine from aminoimidazole ribotide (AIR) in a radical S-adenosyl-L-methionine (SAM)-dependent reaction. This Thermococcus gammatolerans (strain DSM 15229 / JCM 11827 / EJ3) protein is Phosphomethylpyrimidine synthase.